Reading from the N-terminus, the 617-residue chain is D-glucuronyl C5-epimerase (617 aa).

Residues 1 to 11 (MRCLAARVNYK) lie on the Cytoplasmic side of the membrane. A helical; Signal-anchor for type II membrane protein membrane pass occupies residues 12–28 (TLIIICALFTLVTVLLW). Over 29 to 617 (NKCSSDKAIQ…YLKGSRAKHN (589 aa)) the chain is Lumenal. Substrate-binding positions include Y179, 184-186 (RDR), Q201, Y209, Q212, and Q215. The Ca(2+) site is built by T237, E239, T268, N269, and D392. Substrate contacts are provided by residues 429 to 432 (KLGE), 499 to 500 (EY), N510, Y514, Y560, R563, and 572 to 581 (NLARWDYHTT).

It belongs to the D-glucuronyl C5-epimerase family. As to quaternary structure, homodimer. Interacts with HS2ST1.

Its subcellular location is the golgi apparatus membrane. It carries out the reaction [heparosan-N-sulfate](n) = [heparan-N-sulfate](n). Its pathway is glycan metabolism; heparan sulfate biosynthesis. It participates in glycan metabolism; heparin biosynthesis. Its function is as follows. Converts D-glucuronic acid residues adjacent to N-sulfate sugar residues to L-iduronic acid residues, both in maturing heparan sulfate (HS) and heparin chains. This is important for further modifications that determine the specificity of interactions between these glycosaminoglycans and proteins. In Bos taurus (Bovine), this protein is D-glucuronyl C5-epimerase (GLCE).